Consider the following 220-residue polypeptide: Response regulator ArlR (220 aa).

Residues 3–116 (KILIVEDEQN…ELLARIRAML (114 aa)) enclose the Response regulatory domain. Asp52 bears the 4-aspartylphosphate mark. Residues 122–220 (KNLIDIKGII…VRGVGYVVRQ (99 aa)) constitute a DNA-binding region (ompR/PhoB-type).

Post-translationally, phosphorylated by ArlS.

Its subcellular location is the cytoplasm. In terms of biological role, member of the two-component regulatory system ArlS/ArlR. The chain is Response regulator ArlR (arlR) from Staphylococcus saprophyticus subsp. saprophyticus (strain ATCC 15305 / DSM 20229 / NCIMB 8711 / NCTC 7292 / S-41).